A 246-amino-acid chain; its full sequence is Acetoacetate decarboxylase (246 aa).

Lysine 116 acts as the Schiff-base intermediate with acetoacetate in catalysis.

This sequence belongs to the ADC family.

It carries out the reaction acetoacetate + H(+) = acetone + CO2. Catalyzes the conversion of acetoacetate to acetone and carbon dioxide. The chain is Acetoacetate decarboxylase from Burkholderia cenocepacia (strain HI2424).